Consider the following 139-residue polypeptide: Actin-depolymerizing factor 1 (139 aa).

One can recognise an ADF-H domain in the interval 5–139 (ASGMAVCDEC…SMDIVKSRAL (135 aa)).

It belongs to the actin-binding proteins ADF family.

Actin-depolymerizing protein. Severs actin filaments (F-actin) and binds to actin monomers. This chain is Actin-depolymerizing factor 1 (ADF1), found in Oryza sativa subsp. japonica (Rice).